Reading from the N-terminus, the 453-residue chain is tRNA modification GTPase MnmE (453 aa).

Arg-28, Glu-90, and Arg-129 together coordinate (6S)-5-formyl-5,6,7,8-tetrahydrofolate. Residues 224–375 form the TrmE-type G domain; the sequence is GLRVAIIGRP…LSSALLKLCG (152 aa). A K(+)-binding site is contributed by Asn-234. GTP is bound by residues 234–239, 253–259, 278–281, and 356–358; these read NVGKSS, TDLPGTT, DTAG, and SAR. A Mg(2+)-binding site is contributed by Ser-238. Positions 253, 255, and 258 each coordinate K(+). Thr-259 is a binding site for Mg(2+). Residue Lys-453 participates in (6S)-5-formyl-5,6,7,8-tetrahydrofolate binding.

It belongs to the TRAFAC class TrmE-Era-EngA-EngB-Septin-like GTPase superfamily. TrmE GTPase family. In terms of assembly, homodimer. Heterotetramer of two MnmE and two MnmG subunits. It depends on K(+) as a cofactor.

It is found in the cytoplasm. Functionally, exhibits a very high intrinsic GTPase hydrolysis rate. Involved in the addition of a carboxymethylaminomethyl (cmnm) group at the wobble position (U34) of certain tRNAs, forming tRNA-cmnm(5)s(2)U34. This is tRNA modification GTPase MnmE from Synechococcus sp. (strain RCC307).